We begin with the raw amino-acid sequence, 394 residues long: MAKAKFERIKPHVNVGTIGHVDHGKTTLTAAISHVLAKTYGGEAKDFSQIDNAPEERERGITINTSHIEYDTPSRHYAHVDCPGHADYVKNMITGAAQMDGAILVVASTDGPMPQTREHILLSRQVGVPFIIVFMNKCDMVDDEELLELVEMEVRELLSEYDFPGDDLPVIQGSALKALEGEPEWEAKILELAAALDSYIPEPQRDIDKPFLLPIEDVFSISGRGTVVTGRVERGIVRVGDEVEIVGVRATTKTTCTGVEMFRKLLDEGRAGENCGILLRGTKRDDVERGQVLAKPGSINPHTTFESEVYVLSKEEGGRHTPFFKGYRPQFYFRTTDVTGTIELPEGVEMVMPGDNIKMVVTLICPIAMDEGLRFAIREGGRTVGAGVVAKIIA.

The tr-type G domain maps to 10–204 (KPHVNVGTIG…ALDSYIPEPQ (195 aa)). The tract at residues 19-26 (GHVDHGKT) is G1. 19-26 (GHVDHGKT) serves as a coordination point for GTP. Position 26 (Thr26) interacts with Mg(2+). Residues 60–64 (GITIN) are G2. The G3 stretch occupies residues 81–84 (DCPG). Residues 81–85 (DCPGH) and 136–139 (NKCD) contribute to the GTP site. A G4 region spans residues 136–139 (NKCD). Residues 174–176 (SAL) are G5.

This sequence belongs to the TRAFAC class translation factor GTPase superfamily. Classic translation factor GTPase family. EF-Tu/EF-1A subfamily. As to quaternary structure, monomer.

The protein resides in the cytoplasm. It carries out the reaction GTP + H2O = GDP + phosphate + H(+). Its function is as follows. GTP hydrolase that promotes the GTP-dependent binding of aminoacyl-tRNA to the A-site of ribosomes during protein biosynthesis. The polypeptide is Elongation factor Tu (Shewanella putrefaciens (Pseudomonas putrefaciens)).